Here is a 265-residue protein sequence, read N- to C-terminus: Deoxyribose-phosphate aldolase 2 (265 aa).

Residue Asp-108 is the Proton donor/acceptor of the active site. The Schiff-base intermediate with acetaldehyde role is filled by Lys-173. Residue Lys-207 is the Proton donor/acceptor of the active site.

It belongs to the DeoC/FbaB aldolase family. DeoC type 2 subfamily.

The protein localises to the cytoplasm. It catalyses the reaction 2-deoxy-D-ribose 5-phosphate = D-glyceraldehyde 3-phosphate + acetaldehyde. The protein operates within carbohydrate degradation; 2-deoxy-D-ribose 1-phosphate degradation; D-glyceraldehyde 3-phosphate and acetaldehyde from 2-deoxy-alpha-D-ribose 1-phosphate: step 2/2. Catalyzes a reversible aldol reaction between acetaldehyde and D-glyceraldehyde 3-phosphate to generate 2-deoxy-D-ribose 5-phosphate. The polypeptide is Deoxyribose-phosphate aldolase 2 (deoC2) (Yersinia pestis).